A 443-amino-acid chain; its full sequence is Ribosomal protein uS12 methylthiotransferase RimO (443 aa).

The region spanning 5–115 (PNIGFISLGC…VMQHVHKYVP (111 aa)) is the MTTase N-terminal domain. The [4Fe-4S] cluster site is built by cysteine 14, cysteine 50, cysteine 79, cysteine 147, cysteine 151, and cysteine 154. Residues 133–374 (LTPKHYAYLK…MQVQQRISVA (242 aa)) form the Radical SAM core domain. Positions 377–443 (QQKIGKTLAI…ADEYDLWGTY (67 aa)) constitute a TRAM domain.

This sequence belongs to the methylthiotransferase family. RimO subfamily. [4Fe-4S] cluster is required as a cofactor.

It localises to the cytoplasm. The catalysed reaction is L-aspartate(89)-[ribosomal protein uS12]-hydrogen + (sulfur carrier)-SH + AH2 + 2 S-adenosyl-L-methionine = 3-methylsulfanyl-L-aspartate(89)-[ribosomal protein uS12]-hydrogen + (sulfur carrier)-H + 5'-deoxyadenosine + L-methionine + A + S-adenosyl-L-homocysteine + 2 H(+). Functionally, catalyzes the methylthiolation of an aspartic acid residue of ribosomal protein uS12. The chain is Ribosomal protein uS12 methylthiotransferase RimO from Haemophilus ducreyi (strain 35000HP / ATCC 700724).